The sequence spans 133 residues: NADPH-dependent 7-cyano-7-deazaguanine reductase (133 aa).

Cys-48 (thioimide intermediate) is an active-site residue. Asp-55 acts as the Proton donor in catalysis. Residues 70-72 (VEL) and 89-90 (QE) contribute to the substrate site.

This sequence belongs to the GTP cyclohydrolase I family. QueF type 1 subfamily.

It localises to the cytoplasm. It catalyses the reaction 7-aminomethyl-7-carbaguanine + 2 NADP(+) = 7-cyano-7-deazaguanine + 2 NADPH + 3 H(+). It participates in tRNA modification; tRNA-queuosine biosynthesis. In terms of biological role, catalyzes the NADPH-dependent reduction of 7-cyano-7-deazaguanine (preQ0) to 7-aminomethyl-7-deazaguanine (preQ1). The polypeptide is NADPH-dependent 7-cyano-7-deazaguanine reductase (Thermoanaerobacter pseudethanolicus (strain ATCC 33223 / 39E) (Clostridium thermohydrosulfuricum)).